Here is a 76-residue protein sequence, read N- to C-terminus: ATP synthase subunit 9, mitochondrial (76 aa).

A run of 2 helical transmembrane segments spans residues 13-35 (GIST…ALIQ) and 50-72 (FAIL…SFLL).

This sequence belongs to the ATPase C chain family. As to quaternary structure, F-type ATPases have 2 components, CF(1) - the catalytic core - and CF(0) - the membrane proton channel. In yeast, the dimeric form of ATP synthase consists of 18 polypeptides: alpha, beta, gamma, delta, epsilon, 4 (B), 5 (OSCP), 6 (A), 8, 9 (C), d, E (Tim11), f, g, h, i, j and k.

Its subcellular location is the mitochondrion membrane. Mitochondrial membrane ATP synthase (F(1)F(0) ATP synthase or Complex V) produces ATP from ADP in the presence of a proton gradient across the membrane which is generated by electron transport complexes of the respiratory chain. F-type ATPases consist of two structural domains, F(1) - containing the extramembraneous catalytic core and F(0) - containing the membrane proton channel, linked together by a central stalk and a peripheral stalk. During catalysis, ATP synthesis in the catalytic domain of F(1) is coupled via a rotary mechanism of the central stalk subunits to proton translocation. Part of the complex F(0) domain. A homomeric c-ring of probably 10 subunits is part of the complex rotary element. The sequence is that of ATP synthase subunit 9, mitochondrial (ATP9) from Eremothecium gossypii (strain ATCC 10895 / CBS 109.51 / FGSC 9923 / NRRL Y-1056) (Yeast).